A 506-amino-acid polypeptide reads, in one-letter code: Hexokinase-6 (506 aa).

A helical membrane pass occupies residues 6–26 (VVGTAVVVCAAAAAAVGVAVV). Residues 43 to 497 (RRAAAVIEEV…SGIGAALLAA (455 aa)) form the Hexokinase domain. Residues 98-236 (TGDEHGLFYA…GLDMKVTALV (139 aa)) are hexokinase small subdomain. 3 residues coordinate ADP: Gly-112, Thr-113, and Asn-114. D-glucose contacts are provided by Thr-202, Lys-203, Asn-237, and Asp-238. Residues 237-486 (NDTVGTLAGG…SSVVVKLAND (250 aa)) are hexokinase large subdomain. Thr-261 provides a ligand contact to ADP. Residues Asn-264, Glu-292, and Glu-323 each coordinate D-glucose. Residue Gly-451 participates in ADP binding.

This sequence belongs to the hexokinase family. In terms of tissue distribution, expressed in roots, leaves, flowers, immature seeds and endosperm.

Its subcellular location is the plastid. It is found in the chloroplast outer membrane. The enzyme catalyses a D-hexose + ATP = a D-hexose 6-phosphate + ADP + H(+). The catalysed reaction is D-fructose + ATP = D-fructose 6-phosphate + ADP + H(+). It carries out the reaction D-glucose + ATP = D-glucose 6-phosphate + ADP + H(+). It participates in carbohydrate metabolism; hexose metabolism. It functions in the pathway carbohydrate degradation; glycolysis; D-glyceraldehyde 3-phosphate and glycerone phosphate from D-glucose: step 1/4. Fructose and glucose phosphorylating enzyme. Functions as a glucose sensor for plant growth and photosynthesis. The sequence is that of Hexokinase-6 (HXK6) from Oryza sativa subsp. japonica (Rice).